We begin with the raw amino-acid sequence, 369 residues long: Maltose/maltodextrin import ATP-binding protein MalK (369 aa).

The ABC transporter domain occupies 4-234 (VQLRNVTKAW…PADRFVAGFI (231 aa)). ATP is bound at residue 36–43 (GPSGCGKS).

It belongs to the ABC transporter superfamily. Maltooligosaccharide importer (TC 3.A.1.1.1) family. In terms of assembly, the complex is composed of two ATP-binding proteins (MalK), two transmembrane proteins (MalG and MalK) and a solute-binding protein (MalE).

Its subcellular location is the cell inner membrane. It carries out the reaction D-maltose(out) + ATP + H2O = D-maltose(in) + ADP + phosphate + H(+). Functionally, part of the ABC transporter complex MalEFGK involved in maltose/maltodextrin import. Responsible for energy coupling to the transport system. The chain is Maltose/maltodextrin import ATP-binding protein MalK from Salmonella choleraesuis (strain SC-B67).